A 350-amino-acid polypeptide reads, in one-letter code: MPLVAHRELESLDRLRAEGQEILDVRRASQQDIRELHIGLLNLMPDGALKATERQFLRLIGNSNRIAQFYVHIFTVPGVPRSADMQAYIDSHYENFDDLAHDGLDAIIFTGTNPLHADLAQEAYWPHVQRVFDWADKNVTSVLCSCLASHLALQHFHGIARKRRDEKLFGVFSHRVLDRSHPMLANINTRFDMPHSRWNGISAAQLEARGLPVLVAGEESGVAMASSPDGFRQIYFQGHPEYDRSSLLKEFRRDLALYQDGKLPQPPKLPTHYFTPAGQRLIRDYIESGRPISDFPEAQLADEVDVTWRDTAKALFANWLGLVYQLTHKERHLQYMDGIDPADPLGRLRR.

Cys-146 (acyl-thioester intermediate) is an active-site residue. Residues Lys-167 and Ser-196 each coordinate substrate. Catalysis depends on His-239, which acts as the Proton acceptor. Glu-241 is an active-site residue. Residue Arg-253 coordinates substrate.

It belongs to the MetA family.

The protein resides in the cytoplasm. The catalysed reaction is L-homoserine + succinyl-CoA = O-succinyl-L-homoserine + CoA. It functions in the pathway amino-acid biosynthesis; L-methionine biosynthesis via de novo pathway; O-succinyl-L-homoserine from L-homoserine: step 1/1. Functionally, transfers a succinyl group from succinyl-CoA to L-homoserine, forming succinyl-L-homoserine. The polypeptide is Homoserine O-succinyltransferase (Cardiobacterium hominis (strain ATCC 15826 / DSM 8339 / NCTC 10426 / 6573)).